Here is a 476-residue protein sequence, read N- to C-terminus: Glutamate--tRNA ligase (476 aa).

The 'HIGH' region motif lies at 9-19; the sequence is PSPTGLFHIGT. A 'KMSKS' region motif is present at residues 248–252; sequence KLSKR. K251 is an ATP binding site.

Belongs to the class-I aminoacyl-tRNA synthetase family. Glutamate--tRNA ligase type 1 subfamily. In terms of assembly, monomer.

It is found in the cytoplasm. The enzyme catalyses tRNA(Glu) + L-glutamate + ATP = L-glutamyl-tRNA(Glu) + AMP + diphosphate. Catalyzes the attachment of glutamate to tRNA(Glu) in a two-step reaction: glutamate is first activated by ATP to form Glu-AMP and then transferred to the acceptor end of tRNA(Glu). This chain is Glutamate--tRNA ligase, found in Prochlorococcus marinus (strain MIT 9301).